A 472-amino-acid polypeptide reads, in one-letter code: ATP synthase subunit beta (472 aa).

Gly-157–Thr-164 lines the ATP pocket.

The protein belongs to the ATPase alpha/beta chains family. F-type ATPases have 2 components, CF(1) - the catalytic core - and CF(0) - the membrane proton channel. CF(1) has five subunits: alpha(3), beta(3), gamma(1), delta(1), epsilon(1). CF(0) has three main subunits: a(1), b(2) and c(9-12). The alpha and beta chains form an alternating ring which encloses part of the gamma chain. CF(1) is attached to CF(0) by a central stalk formed by the gamma and epsilon chains, while a peripheral stalk is formed by the delta and b chains.

The protein localises to the cell inner membrane. It catalyses the reaction ATP + H2O + 4 H(+)(in) = ADP + phosphate + 5 H(+)(out). Its function is as follows. Produces ATP from ADP in the presence of a proton gradient across the membrane. The catalytic sites are hosted primarily by the beta subunits. The protein is ATP synthase subunit beta of Desulfatibacillum aliphaticivorans.